The sequence spans 1048 residues: Histone deacetylase complex subunit SAP130 (1048 aa).

Residues 1-95 (MGPPRHPQAG…LQSREEKQEP (95 aa)) are disordered. Residues 40–54 (TGLSQAPSQIANSGS) are compositionally biased toward polar residues. Basic and acidic residues predominate over residues 67–80 (ESGRDSEVSAREHM). At R232 the chain carries Omega-N-methylarginine. T355 bears the Phosphothreonine mark. S442 and S465 each carry phosphoserine. Disordered stretches follow at residues 458–477 (PISGHRASPNPVAMETRSDN), 576–617 (IGTP…PEGK), and 649–687 (QTHSQSASTNAPAQGSSPRPSILRKKPATDGAKPKSEIH). Composition is skewed to polar residues over residues 590–613 (GIHSATPINTQGLQPAPMGTQQPQ) and 649–667 (QTHSQSASTNAPAQGSSPR). A Glycyl lysine isopeptide (Lys-Gly) (interchain with G-Cter in SUMO2) cross-link involves residue K785. The segment at 819–871 (LSMPTSDLPPGASPRKKPRKQQHVISTEEGDMMETNSTDDEKSTAKSLLVKAE) is disordered. The interval 836–1047 (PRKQQHVIST…KVSKLKRKEK (212 aa)) is interactions with SIN3A and HDAC1. Phosphoserine is present on S855. Residue T856 is modified to Phosphothreonine. Glycyl lysine isopeptide (Lys-Gly) (interchain with G-Cter in SUMO2) cross-links involve residues K864 and K869. The residue at position 875 (S875) is a Phosphoserine.

The protein belongs to the SAP130 family. In terms of assembly, component of a mSin3A corepressor complex that contains SIN3A, SAP130, SUDS3/SAP45, ARID4B/SAP180, HDAC1 and HDAC2. Interacts (released by dead or dying cells) with CLEC4E. In terms of processing, acetylated. Post-translationally, sumoylated with SUMO1. As to expression, expressed in various cancer cell ines.

Its subcellular location is the nucleus. In terms of biological role, acts as a transcriptional repressor. May function in the assembly and/or enzymatic activity of the mSin3A corepressor complex or in mediating interactions between the complex and other regulatory complexes. The sequence is that of Histone deacetylase complex subunit SAP130 (SAP130) from Homo sapiens (Human).